We begin with the raw amino-acid sequence, 248 residues long: Tabinhibitin 10 (248 aa).

The signal sequence occupies residues 1 to 22 (MTLKRIFCAALALIVLQSVASA). An SCP domain is found at 66-208 (LQKTNWLRGV…NYKGAFHCSL (143 aa)). The Cell attachment site signature appears at 221–223 (RGD).

This sequence belongs to the CRISP family. Expressed in salivary glands.

It is found in the secreted. Its function is as follows. Inhibits platelet aggregation induced by all agonists tested (ADP, arachidonic acid, the thromboxane A2 analog U46619, thrombin, and snake venom snaclecs (TMVA that activates platelet through GPIB, and stejnulxin that specifically acts through GPVI (GP6))). May act by competing with fibrinogen for binding to glycoprotein IIb/IIIa (ITGA2B/ITGB3). The chain is Tabinhibitin 10 from Tabanus yao (Horsefly).